Here is a 268-residue protein sequence, read N- to C-terminus: L-cystine-binding protein TcyA (268 aa).

An N-terminal signal peptide occupies residues M1–A19. The N-palmitoyl cysteine moiety is linked to residue C20. A lipid anchor (S-diacylglycerol cysteine) is attached at C20.

Belongs to the bacterial solute-binding protein 3 family. The complex is composed of two ATP-binding proteins (TcyC), two transmembrane proteins (TcyB) and a solute-binding protein (TcyA).

It is found in the cell membrane. In terms of biological role, part of the ABC transporter complex TcyABC involved in L-cystine import. The sequence is that of L-cystine-binding protein TcyA (tcyA) from Bacillus subtilis (strain 168).